We begin with the raw amino-acid sequence, 225 residues long: tRNA (guanine-N(7)-)-methyltransferase (225 aa).

Residues Glu56, Glu81, Asp108, and Asp131 each coordinate S-adenosyl-L-methionine. Residue Asp131 is part of the active site. Residues Lys135, Asp167, and 204–207 (TKFE) contribute to the substrate site.

This sequence belongs to the class I-like SAM-binding methyltransferase superfamily. TrmB family.

It carries out the reaction guanosine(46) in tRNA + S-adenosyl-L-methionine = N(7)-methylguanosine(46) in tRNA + S-adenosyl-L-homocysteine. Its pathway is tRNA modification; N(7)-methylguanine-tRNA biosynthesis. Functionally, catalyzes the formation of N(7)-methylguanine at position 46 (m7G46) in tRNA. The protein is tRNA (guanine-N(7)-)-methyltransferase of Legionella pneumophila (strain Lens).